The primary structure comprises 601 residues: Keratin, type II cytoskeletal 5 (601 aa).

The head stretch occupies residues 1-168 (MSRQSTVSFR…DPTIQRVRTE (168 aa)). A phosphoserine mark is found at serine 5, serine 8, serine 16, and serine 21. Position 24 is a phosphothreonine; by CDK1 (threonine 24). Serine 26, serine 36, serine 50, serine 64, serine 71, and serine 75 each carry phosphoserine. Threonine 152 is subject to Phosphothreonine; by CDK1. At threonine 167 the chain carries Phosphothreonine; by AURKB. Positions 169 to 204 (EREQIKTLNNKFASFIDKVRFLEQQNKVLDTKWALL) are coil 1A. The IF rod domain occupies 169–482 (EREQIKTLNN…KLLEGEECRL (314 aa)). The linker 1 stretch occupies residues 205-223 (QEQGTKTVRQNLEPLLEQY). The coil 1B stretch occupies residues 224–316 (INNLRRQLDG…FFDAELSQMQ (93 aa)). Residues 317–339 (THVSDTSVVLSMDNNRSLDLDSI) are linker 12. A coil 2 region spans residues 340-478 (IAEVKAQYED…ATYRKLLEGE (139 aa)). The interval 479-601 (ECRLSGEGVG…TSSSRKSFKS (123 aa)) is tail. The segment at 576 to 601 (FGSGGGSSSSVKFVSTTSSSRKSFKS) is disordered. The segment covering 583–601 (SSSVKFVSTTSSSRKSFKS) has biased composition (low complexity).

The protein belongs to the intermediate filament family. As to quaternary structure, heterodimer of a type I and a type II keratin. Heterodimer with type I keratin KRT25 leading to the formation of keratin intermediate filament (KIF) network. Forms a heterodimer (via 2B domains) with KRT14 (via 2B domains). Interacts with TCHP. Interacts with EPPK1. Interacts with AMELX. Interacts with PKP1 (via N-terminus) and PKP2. Post-translationally, phosphorylated by CDK1, AURKB and Rho-kinase, phosphorylation is regulated by the cell cycle. Thr-24 phosphorylation, mediated by CDK1, peaks during prometaphase or metaphase cells with phosphorylated filamentous structures evident throughout the cytoplasm early mitosis. CDK1 phosphorylates Thr-24 in mitotic cells at the site of injury. In terms of processing, O-glycosylated.

The protein localises to the cytoplasm. Required for the formation of keratin intermediate filaments in the basal epidermis and maintenance of the skin barrier in response to mechanical stress. Regulates the recruitment of Langerhans cells to the epidermis, potentially by modulation of the abundance of macrophage chemotactic cytokines, macrophage inflammatory cytokines and CTNND1 localization in keratinocytes. This chain is Keratin, type II cytoskeletal 5, found in Bos taurus (Bovine).